The sequence spans 247 residues: tRNA pseudouridine synthase A (247 aa).

Aspartate 53 serves as the catalytic Nucleophile. Residue tyrosine 112 participates in substrate binding.

The protein belongs to the tRNA pseudouridine synthase TruA family. In terms of assembly, homodimer.

It carries out the reaction uridine(38/39/40) in tRNA = pseudouridine(38/39/40) in tRNA. Formation of pseudouridine at positions 38, 39 and 40 in the anticodon stem and loop of transfer RNAs. In Anaplasma marginale (strain Florida), this protein is tRNA pseudouridine synthase A.